A 1098-amino-acid polypeptide reads, in one-letter code: Mediator of RNA polymerase II transcription subunit 5 (1098 aa).

The tract at residues 1019 to 1041 (PDDVQKSADMKPDTGIKEDDSEK) is disordered. Over residues 1021–1041 (DVQKSADMKPDTGIKEDDSEK) the composition is skewed to basic and acidic residues.

Belongs to the Mediator complex subunit 5 family. Component of the Mediator complex.

The protein localises to the nucleus. Component of the Mediator complex, a coactivator involved in the regulated transcription of nearly all RNA polymerase II-dependent genes. Mediator functions as a bridge to convey information from gene-specific regulatory proteins to the basal RNA polymerase II transcription machinery. Mediator is recruited to promoters by direct interactions with regulatory proteins and serves as a scaffold for the assembly of a functional preinitiation complex with RNA polymerase II and the general transcription factors. The protein is Mediator of RNA polymerase II transcription subunit 5 (NUT1) of Eremothecium gossypii (strain ATCC 10895 / CBS 109.51 / FGSC 9923 / NRRL Y-1056) (Yeast).